A 202-amino-acid polypeptide reads, in one-letter code: Small ribosomal subunit protein uS4 (202 aa).

A compositionally biased stretch (basic residues) spans 1–13 (MSRYRGPRLRVTR). Positions 1–42 (MSRYRGPRLRVTRRLGELPGLTRKASKKSNPPGQHGQARRKR) are disordered. The S4 RNA-binding domain maps to 90–152 (NRLDNVCFRL…KASKKLVEGN (63 aa)).

Belongs to the universal ribosomal protein uS4 family. As to quaternary structure, part of the 30S ribosomal subunit. Contacts protein S5. The interaction surface between S4 and S5 is involved in control of translational fidelity.

Its function is as follows. One of the primary rRNA binding proteins, it binds directly to 16S rRNA where it nucleates assembly of the body of the 30S subunit. Functionally, with S5 and S12 plays an important role in translational accuracy. This is Small ribosomal subunit protein uS4 from Prochlorococcus marinus (strain MIT 9515).